Reading from the N-terminus, the 191-residue chain is Inosine triphosphate pyrophosphatase (191 aa).

12-17 contributes to the ITP binding site; sequence TGNANK. E42 is a Mg(2+) binding site. ITP contacts are provided by residues K54, 70–71, K87, 145–148, K168, and 173–174; these read DT, FGWD, and HR.

Belongs to the HAM1 NTPase family. Homodimer. It depends on Mg(2+) as a cofactor. The cofactor is Mn(2+).

The protein localises to the cytoplasm. The enzyme catalyses ITP + H2O = IMP + diphosphate + H(+). The catalysed reaction is dITP + H2O = dIMP + diphosphate + H(+). It catalyses the reaction XTP + H2O = XMP + diphosphate + H(+). Functionally, pyrophosphatase that hydrolyzes non-canonical purine nucleotides such as inosine triphosphate (ITP), deoxyinosine triphosphate (dITP) or xanthosine 5'-triphosphate (XTP) to their respective monophosphate derivatives. The enzyme does not distinguish between the deoxy- and ribose forms. Probably excludes non-canonical purines from RNA and DNA precursor pools, thus preventing their incorporation into RNA and DNA and avoiding chromosomal lesions. This Phytophthora infestans (strain T30-4) (Potato late blight agent) protein is Inosine triphosphate pyrophosphatase.